Reading from the N-terminus, the 432-residue chain is Beta-fructosidase (432 aa).

Residues 14–17 (WMND), glutamine 33, tryptophan 41, 74–75 (FS), tyrosine 92, 137–138 (RD), 188–190 (EIE), threonine 208, and tryptophan 260 each bind substrate. Aspartate 17 is an active-site residue.

This sequence belongs to the glycosyl hydrolase 32 family.

The enzyme catalyses Hydrolysis of terminal non-reducing beta-D-fructofuranoside residues in beta-D-fructofuranosides.. Functionally, hydrolysis of sucrose, raffinose, inulin and levan. Specific for the fructose moiety and the beta-anomeric configuration of the glycosidic linkages of its substrates. The enzyme released fructose from sucrose and raffinose, and the fructose polymer inulin is hydrolyzed quantitatively in an exo-type fashion. This is Beta-fructosidase (bfrA) from Thermotoga maritima (strain ATCC 43589 / DSM 3109 / JCM 10099 / NBRC 100826 / MSB8).